A 151-amino-acid polypeptide reads, in one-letter code: MKKIDIKILDPRVGNEFPLPTYATEGSAGLDLRACLDHAVELQPGQTTLLPTGLAIHIGDSALAAVILPRSGLGHKHGIVLGNLVGLIDSDYQGQLMVSVWNRGQQPFTIEPGERIAQMVFVPVVQAEFNLVEDFTDSERGTGGFGHSGRQ.

Substrate contacts are provided by residues 70-72 (RSG), N83, 87-89 (LID), and M97.

The protein belongs to the dUTPase family. Requires Mg(2+) as cofactor.

It catalyses the reaction dUTP + H2O = dUMP + diphosphate + H(+). Its pathway is pyrimidine metabolism; dUMP biosynthesis; dUMP from dCTP (dUTP route): step 2/2. Functionally, this enzyme is involved in nucleotide metabolism: it produces dUMP, the immediate precursor of thymidine nucleotides and it decreases the intracellular concentration of dUTP so that uracil cannot be incorporated into DNA. The sequence is that of Deoxyuridine 5'-triphosphate nucleotidohydrolase from Yersinia pseudotuberculosis serotype O:1b (strain IP 31758).